A 140-amino-acid polypeptide reads, in one-letter code: Large ribosomal subunit protein uL13 (140 aa).

Part of the 50S ribosomal subunit.

Its function is as follows. This protein is one of the early assembly proteins of the 50S ribosomal subunit, although it is not seen to bind rRNA by itself. It is important during the early stages of 50S assembly. The sequence is that of Large ribosomal subunit protein uL13 from Thermus thermophilus (strain ATCC 27634 / DSM 579 / HB8).